A 142-amino-acid polypeptide reads, in one-letter code: Hemoglobin subunit alpha (142 aa).

The Globin domain maps to 2-142 (VLSANDKSNV…VGNVLTSKYR (141 aa)). Residue H59 participates in O2 binding. Heme b is bound at residue H88.

It belongs to the globin family. In terms of assembly, heterotetramer of two alpha chains and two beta chains. In terms of tissue distribution, red blood cells.

Functionally, involved in oxygen transport from the lung to the various peripheral tissues. The chain is Hemoglobin subunit alpha (HBA) from Aptenodytes forsteri (Emperor penguin).